The chain runs to 719 residues: Catalase-3 (719 aa).

A signal peptide spans 1–18; it reads MRVNALLPLSGLIGTALA. Residues 19 to 30 constitute a propeptide that is removed on maturation; the sequence is ACPFADPSALGR. Active-site residues include His-102 and Asn-175. Residue Tyr-389 participates in heme binding.

The protein belongs to the catalase family. Heme serves as cofactor.

It carries out the reaction 2 H2O2 = O2 + 2 H2O. In terms of biological role, occurs in almost all aerobically respiring organisms and serves to protect cells from the toxic effects of hydrogen peroxide. This Neurospora crassa (strain ATCC 24698 / 74-OR23-1A / CBS 708.71 / DSM 1257 / FGSC 987) protein is Catalase-3 (cat-3).